Reading from the N-terminus, the 212-residue chain is MIRSVLLRALAARPPSAPVPGHLHRCLLGTHRRKIKPEQLELPNQTREFVYSLSPETRSRLLKELQTFESKTEDSGEASRLTAAQLRYILLHNAIPFIGFGFLDNAIMIAAGTQIELSIGLTLGISTMAAAALGNLVSDLAGLGLAGYVEALAVRLGMQIPDLSPRQVDMWQTRVSSHMGKAIGVAIGCILGMFPLLFLSDEEDKKPKKDSN.

Topologically, residues 1–88 are cytoplasmic; that stretch reads MIRSVLLRAL…SRLTAAQLRY (88 aa). Residues 89-109 form a helical membrane-spanning segment; it reads ILLHNAIPFIGFGFLDNAIMI. The Extracellular portion of the chain corresponds to 110–116; the sequence is AAGTQIE. The helical transmembrane segment at 117 to 137 threads the bilayer; that stretch reads LSIGLTLGISTMAAAALGNLV. Residues 138-139 lie on the Cytoplasmic side of the membrane; it reads SD. Residues 140–160 traverse the membrane as a helical segment; that stretch reads LAGLGLAGYVEALAVRLGMQI. Topologically, residues 161-178 are extracellular; it reads PDLSPRQVDMWQTRVSSH. Residues 179 to 199 traverse the membrane as a helical segment; that stretch reads MGKAIGVAIGCILGMFPLLFL. Residues 200–212 lie on the Cytoplasmic side of the membrane; the sequence is SDEEDKKPKKDSN.

In terms of assembly, monomer. Homodimer. Interacts with GJA1. Expression is restricted to the heart (at protein level).

The protein localises to the cell membrane. It localises to the mitochondrion inner membrane. Its function is as follows. Essential for maintaining proper cardiac intercalated disk (ICD) structure and function. May regulate cardiac conduction and the function of the gap junction protein GJA1. May contribute to the stability and proper localization of GJA1 to cardiac intercalated disk thereby regulating gap junction communication. Regulates mitochondrial respiration and mitochondrial DNA copy number maintenance. In Danio rerio (Zebrafish), this protein is Transmembrane protein 65 (tmem65).